Reading from the N-terminus, the 226-residue chain is Probable transaldolase (226 aa).

The active-site Schiff-base intermediate with substrate is the lysine 91.

The protein belongs to the transaldolase family. Type 3B subfamily.

It localises to the cytoplasm. It catalyses the reaction D-sedoheptulose 7-phosphate + D-glyceraldehyde 3-phosphate = D-erythrose 4-phosphate + beta-D-fructose 6-phosphate. It participates in carbohydrate degradation; pentose phosphate pathway; D-glyceraldehyde 3-phosphate and beta-D-fructose 6-phosphate from D-ribose 5-phosphate and D-xylulose 5-phosphate (non-oxidative stage): step 2/3. In terms of biological role, transaldolase is important for the balance of metabolites in the pentose-phosphate pathway. The polypeptide is Probable transaldolase (Chlorobium phaeobacteroides (strain DSM 266 / SMG 266 / 2430)).